The sequence spans 457 residues: UDP-N-acetylmuramoylalanine--D-glutamate ligase (457 aa).

117 to 123 (GTNGKST) contributes to the ATP binding site.

It belongs to the MurCDEF family.

It localises to the cytoplasm. The enzyme catalyses UDP-N-acetyl-alpha-D-muramoyl-L-alanine + D-glutamate + ATP = UDP-N-acetyl-alpha-D-muramoyl-L-alanyl-D-glutamate + ADP + phosphate + H(+). It functions in the pathway cell wall biogenesis; peptidoglycan biosynthesis. Cell wall formation. Catalyzes the addition of glutamate to the nucleotide precursor UDP-N-acetylmuramoyl-L-alanine (UMA). In Paramagnetospirillum magneticum (strain ATCC 700264 / AMB-1) (Magnetospirillum magneticum), this protein is UDP-N-acetylmuramoylalanine--D-glutamate ligase.